A 1396-amino-acid polypeptide reads, in one-letter code: Integrin alpha-PS2 (1396 aa).

An N-terminal signal peptide occupies residues 1–31 (MSGDSIHRRRMALHCPITSLILLLIAMSAHG). The Extracellular portion of the chain corresponds to 32–1341 (YNIDLPSYVR…EPEPLQVPDV (1310 aa)). FG-GAP repeat units follow at residues 36–106 (LPSY…DCKL), 117–174 (NVDK…FTSH), 186–239 (RTNN…FPFK), 266–317 (STSE…RWNM), 318–383 (ANIF…TEEK), 386–445 (TTEH…GPLA), and 452–514 (KSEQ…FASN). N-linked (GlcNAc...) asparagine glycosylation occurs at N69. An N-linked (GlcNAc...) asparagine glycan is attached at N209. The N-linked (GlcNAc...) asparagine glycan is linked to N322. Residues N584, N598, N741, N783, N833, and N959 are each glycosylated (N-linked (GlcNAc...) asparagine). Disordered regions lie at residues 960 to 1107 (STDA…LGTL) and 1159 to 1246 (PGFQ…KPLQ). Positions 963-979 (AGDKLSPKQVEQRRQED) are enriched in basic and acidic residues. The span at 997–1006 (QAVQEPQVNQ) shows a compositional bias: polar residues. N-linked (GlcNAc...) asparagine glycosylation occurs at N1005. 2 stretches are compositionally biased toward low complexity: residues 1007–1021 (TSFT…SSGS) and 1060–1071 (QQQQQHQQLLLA). A compositionally biased stretch (polar residues) spans 1082-1099 (VTFNDKSQFGGRNNNFHT). 2 stretches are compositionally biased toward low complexity: residues 1162–1182 (QGQT…GYQT) and 1217–1226 (SSSSSSSSSS). Residues N1299 and N1307 are each glycosylated (N-linked (GlcNAc...) asparagine). The helical transmembrane segment at 1342–1366 (VPLWVVVLAACAGALIFLLLVWLLY) threads the bilayer. The Cytoplasmic segment spans residues 1367-1396 (KCGFFNRNRPTDHSQERQPLRNGYHGDEHL). A disordered region spans residues 1377-1396 (TDHSQERQPLRNGYHGDEHL).

Belongs to the integrin alpha chain family. Heterodimer of an alpha and a beta subunit. The alpha subunit is composed of a heavy and a light chain linked by a disulfide bond. Alpha-PS2 associates with beta-PS. The heavy-light chain cleavage site is either in 1230-1231, or 1233-1234, or 1243-1244. In terms of tissue distribution, in ovaries, highly expressed in follicle cells. At syncytial blastoderm stage, expressed in the embryonic mesodermal precursors but not in the ectoderm. At embryonic stages 7 and 10, expression is restricted to the mesoderm. At stage 12, expressed in the gonadal sheath and the interstitial cells of the gonad. In stage 16 embryos, expressed in the somatic and visceral muscles where localizes to sites of attachment between adjacent muscles. In third larval instar wing imaginal disk, expressed in the ventral compartment and in a subset of adepithelial and peripodial cells (at protein level).

It is found in the apical cell membrane. Its subcellular location is the lateral cell membrane. The protein localises to the basal cell membrane. Its function is as follows. Alpha-PS2/beta-PS is a receptor for Tig, wb and Ten-m. Involved in the function and/or development of the olfactory system. This is Integrin alpha-PS2 (if) from Drosophila melanogaster (Fruit fly).